A 569-amino-acid polypeptide reads, in one-letter code: Cryptochrome DASH, chloroplastic/mitochondrial (569 aa).

The 138-residue stretch at 84-221 folds into the Photolyase/cryptochrome alpha/beta domain; it reads GVTILWFRND…KLELIWGSTM (138 aa). FAD is bound by residues Y316 and 329–333; that span reads STKFS. Residue R436 participates in ATP binding. The FAD site is built by D466 and D468. ATP is bound at residue D485. The tract at residues 541–569 is disordered; sequence GNGPMAGGSKSGGGFRGSHSGRRSRHNGP. Over residues 544-556 the composition is skewed to gly residues; sequence PMAGGSKSGGGFR. Residues 559 to 569 are compositionally biased toward basic residues; that stretch reads HSGRRSRHNGP.

It belongs to the DNA photolyase class-1 family. In terms of assembly, homodimer. It depends on FAD as a cofactor. (6R)-5,10-methylene-5,6,7,8-tetrahydrofolate serves as cofactor.

The protein resides in the plastid. The protein localises to the chloroplast. It is found in the mitochondrion. Functionally, may have a photoreceptor function. Binds ss- and ds-DNA in a sequence non-specific manner. Has a photolyase activity specific for cyclobutane pyrimidine dimers in ssDNA. This Arabidopsis thaliana (Mouse-ear cress) protein is Cryptochrome DASH, chloroplastic/mitochondrial (CRYD).